The following is a 232-amino-acid chain: Enolase-phosphatase E1 (232 aa).

It belongs to the HAD-like hydrolase superfamily. MasA/MtnC family. In terms of assembly, monomer. Mg(2+) is required as a cofactor.

It catalyses the reaction 5-methylsulfanyl-2,3-dioxopentyl phosphate + H2O = 1,2-dihydroxy-5-(methylsulfanyl)pent-1-en-3-one + phosphate. It participates in amino-acid biosynthesis; L-methionine biosynthesis via salvage pathway; L-methionine from S-methyl-5-thio-alpha-D-ribose 1-phosphate: step 3/6. It functions in the pathway amino-acid biosynthesis; L-methionine biosynthesis via salvage pathway; L-methionine from S-methyl-5-thio-alpha-D-ribose 1-phosphate: step 4/6. Bifunctional enzyme that catalyzes the enolization of 2,3-diketo-5-methylthiopentyl-1-phosphate (DK-MTP-1-P) into the intermediate 2-hydroxy-3-keto-5-methylthiopentenyl-1-phosphate (HK-MTPenyl-1-P), which is then dephosphorylated to form the acireductone 1,2-dihydroxy-3-keto-5-methylthiopentene (DHK-MTPene). The protein is Enolase-phosphatase E1 of Xanthomonas euvesicatoria pv. vesicatoria (strain 85-10) (Xanthomonas campestris pv. vesicatoria).